Here is a 901-residue protein sequence, read N- to C-terminus: Protein SOK1 (901 aa).

Disordered regions lie at residues Met1–Ile87, Arg106–Lys139, and Asn162–Asn231. Residues Pro10–Lys51 are compositionally biased toward low complexity. 2 positions are modified to phosphoserine: Ser40 and Ser53. Composition is skewed to polar residues over residues Gly74–Ile87 and Arg106–Met115. Residues Ser116–Leu138 show a composition bias toward low complexity. 2 positions are modified to phosphoserine: Ser191 and Ser193. A compositionally biased stretch (polar residues) spans Ala220–Asn231. The residue at position 245 (Ser245) is a Phosphoserine.

It belongs to the TCP11 family.

Its subcellular location is the nucleus. Its function is as follows. High copy suppressor of a cyclic AMP-dependent protein kinase mutant. This chain is Protein SOK1 (SOK1), found in Saccharomyces cerevisiae (strain ATCC 204508 / S288c) (Baker's yeast).